The following is a 185-amino-acid chain: Elongation factor P (185 aa).

The protein belongs to the elongation factor P family.

The protein localises to the cytoplasm. Its pathway is protein biosynthesis; polypeptide chain elongation. Its function is as follows. Involved in peptide bond synthesis. Stimulates efficient translation and peptide-bond synthesis on native or reconstituted 70S ribosomes in vitro. Probably functions indirectly by altering the affinity of the ribosome for aminoacyl-tRNA, thus increasing their reactivity as acceptors for peptidyl transferase. This chain is Elongation factor P, found in Clostridium kluyveri (strain ATCC 8527 / DSM 555 / NBRC 12016 / NCIMB 10680 / K1).